Here is a 350-residue protein sequence, read N- to C-terminus: Mitochondrial glycine transporter (350 aa).

Solcar repeat units follow at residues 23–107 (SKPK…LRQC), 134–218 (LSHT…SKKN), and 250–334 (SSIS…LILK). Transmembrane regions (helical) follow at residues 29 to 54 (FIAG…TRIQ), 82 to 108 (GTLP…RQCI), 140 to 165 (LLTG…VRYE), 193 to 216 (GFGA…EQSK), 254 to 280 (VNFV…KTRL), and 309 to 327 (GLGL…AWTV).

It belongs to the mitochondrial carrier (TC 2.A.29) family. SLC25A38 subfamily.

It localises to the mitochondrion inner membrane. The catalysed reaction is glycine(in) = glycine(out). Functionally, mitochondrial glycine transporter that imports glycine into the mitochondrial matrix. Plays an important role in providing glycine for the first enzymatic step in heme biosynthesis, the condensation of glycine with succinyl-CoA to produce 5-aminolevulinate (ALA) in the mitochondrial matrix. The sequence is that of Mitochondrial glycine transporter from Ajellomyces capsulatus (strain NAm1 / WU24) (Darling's disease fungus).